Here is a 285-residue protein sequence, read N- to C-terminus: MERPIRHGAKTKQCRCLGTTELSMSQIDHQVHSIGPEVTGSRIFKFIAFLYGIAAYLVFFVTILYAIGFVMGLVVPKTIDTGTDTSTAEAVIINLLLMALFAVQHSVMARQRFKTWWTQFVSKPIERSTYVLFASLSLLLLFWQWRPLPTVIWEVEDPDLAVTLVTVSFAGWVLVFTSTFIINHFELFGLHQVTNHLVGKEATPPRFKTPLLYKFVRHPIYLGFIVAFWAAPVMTAGHLLFAAVTTIYIFVGIALEERDLIDLFGDEYRQYKQRVSMLIPWRRSV.

5 helical membrane passes run 55–75 (AYLV…GLVV), 88–108 (AEAV…HSVM), 132–152 (LFAS…PTVI), 162–182 (VTLV…TFII), and 224–244 (FIVA…FAAV).

It belongs to the nurim family.

It localises to the membrane. The catalysed reaction is methanethiol + S-adenosyl-L-methionine = dimethyl sulfide + S-adenosyl-L-homocysteine + H(+). Its function is as follows. Catalyzes the methylation of methanethiol (MeSH) to yield dimethylsulphide (DMS). This Bradyrhizobium diazoefficiens (strain JCM 10833 / BCRC 13528 / IAM 13628 / NBRC 14792 / USDA 110) protein is Methanethiol S-methyltransferase 1.